Consider the following 345-residue polypeptide: Telomere-binding protein cav (345 aa).

The required for binding to Su(var)205 stretch occupies residues 115 to 337; that stretch reads RRKMVQPYPE…TITFQNTESE (223 aa). 2 disordered regions span residues 145-180 and 200-231; these read RLDR…HEDQ and PPGV…INRP. 2 consecutive short sequence motifs (su(var)205-binding Pro-containing repeat) follow at residues 231-237 and 298-304; these read PETEINE and PETEMNE.

In terms of assembly, component of the HipHop-HOAP telomere capping complex, composed of at least HipHop and cav/HOAP, and may include Su(var)205/HP1; HipHop and cav/HOAP, but not Su(var)205, are interdependent for their protein stability. Interacts with HipHop (via N-terminus). Interacts (via C-terminus) with Su(var)205/HP1 dimer (via hinge and chromoshadow domain) and Orc1; possibly interacts with other components of the origin recognition complex (ORC). Each molecule of cav/HOAP interacts with 2 molecules of Su(var)205/HP1. The HipHop-HOAP complex recruits the MTV complex, consisting of moi/modigliani, tea and ver/verrocchio, to telomeres, forming the terminin telomere-capping complex. Interacts with moi/modigliani; the interaction is direct. Interacts with ver/verrochio; the interaction is direct. Interacts with HP6, which is also part of the terminin complex. Interacts (via N-terminus) with peo/pendolino (via N-terminus); the interaction is direct.

Its subcellular location is the nucleus. The protein resides in the chromosome. It is found in the telomere. Its function is as follows. Part of the HipHop-HOAP complex that recruits the MTV complex to form the terminin telomere-capping complex, which binds to chromosome ends in a sequence-independent manner and prevents telomere fusion. Telomere capping is independent of the origin recognition complex (ORC). The chain is Telomere-binding protein cav from Drosophila melanogaster (Fruit fly).